Reading from the N-terminus, the 389-residue chain is Leucine aminopeptidase 1 (389 aa).

Residues M1–A18 form the signal peptide. Residues A19–S89 constitute a propeptide that is removed on maturation. N-linked (GlcNAc...) asparagine glycans are attached at residues N99, N146, and N156. Zn(2+) is bound by residues H188, D207, E246, and D273. An intrachain disulfide couples C322 to C326. A Zn(2+)-binding site is contributed by H355.

It belongs to the peptidase M28 family. M28E subfamily. As to quaternary structure, monomer. Zn(2+) serves as cofactor.

The protein localises to the secreted. Extracellular aminopeptidase that allows assimilation of proteinaceous substrates. The sequence is that of Leucine aminopeptidase 1 (lap1) from Pyrenophora tritici-repentis (strain Pt-1C-BFP) (Wheat tan spot fungus).